The following is an 85-amino-acid chain: MKKIFLAMIHFYQRFISPLTPPTCRFYPTCSEYTREAIQYHGAFKGLYLGIRRILKCHPLHKGGFDPVPLKKDKSASKHSHKHNH.

The interval 62–85 (KGGFDPVPLKKDKSASKHSHKHNH) is disordered.

This sequence belongs to the UPF0161 family.

It is found in the cell membrane. In terms of biological role, could be involved in insertion of integral membrane proteins into the membrane. This chain is Putative membrane protein insertion efficiency factor, found in Staphylococcus aureus (strain Mu3 / ATCC 700698).